The primary structure comprises 120 residues: Large ribosomal subunit protein bL12 (120 aa).

It belongs to the bacterial ribosomal protein bL12 family. As to quaternary structure, homodimer. Part of the ribosomal stalk of the 50S ribosomal subunit. Forms a multimeric L10(L12)X complex, where L10 forms an elongated spine to which 2 to 4 L12 dimers bind in a sequential fashion. Binds GTP-bound translation factors.

In terms of biological role, forms part of the ribosomal stalk which helps the ribosome interact with GTP-bound translation factors. Is thus essential for accurate translation. This is Large ribosomal subunit protein bL12 from Pseudoalteromonas translucida (strain TAC 125).